Here is a 362-residue protein sequence, read N- to C-terminus: Probable dual-specificity RNA methyltransferase RlmN (362 aa).

Residue Glu105 is the Proton acceptor of the active site. The Radical SAM core domain occupies 111-344; sequence HEYGNSICVT…VTIRREQGHD (234 aa). Cys118 and Cys349 are disulfide-bonded. [4Fe-4S] cluster-binding residues include Cys125, Cys129, and Cys132. Residues 175–176, Ser207, 230–232, and Asn306 each bind S-adenosyl-L-methionine; these read GE and SLH. The S-methylcysteine intermediate role is filled by Cys349.

The protein belongs to the radical SAM superfamily. RlmN family. [4Fe-4S] cluster serves as cofactor.

It localises to the cytoplasm. It carries out the reaction adenosine(2503) in 23S rRNA + 2 reduced [2Fe-2S]-[ferredoxin] + 2 S-adenosyl-L-methionine = 2-methyladenosine(2503) in 23S rRNA + 5'-deoxyadenosine + L-methionine + 2 oxidized [2Fe-2S]-[ferredoxin] + S-adenosyl-L-homocysteine. It catalyses the reaction adenosine(37) in tRNA + 2 reduced [2Fe-2S]-[ferredoxin] + 2 S-adenosyl-L-methionine = 2-methyladenosine(37) in tRNA + 5'-deoxyadenosine + L-methionine + 2 oxidized [2Fe-2S]-[ferredoxin] + S-adenosyl-L-homocysteine. Specifically methylates position 2 of adenine 2503 in 23S rRNA and position 2 of adenine 37 in tRNAs. In Bacillus cereus (strain B4264), this protein is Probable dual-specificity RNA methyltransferase RlmN.